Here is a 447-residue protein sequence, read N- to C-terminus: D-ribitol-5-phosphate cytidylyltransferase (447 aa).

The protein belongs to the IspD/TarI cytidylyltransferase family. IspD subfamily. In terms of assembly, homodimer.

Its subcellular location is the cytoplasm. The protein resides in the cytosol. It catalyses the reaction D-ribitol 5-phosphate + CTP + H(+) = CDP-L-ribitol + diphosphate. The catalysed reaction is D-ribose 5-phosphate + CTP + H(+) = CDP-D-ribose + diphosphate. The enzyme catalyses D-ribulose 5-phosphate + CTP + H(+) = CDP-D-ribulose + diphosphate. Its pathway is protein modification; protein glycosylation. Its function is as follows. Cytidylyltransferase required for protein O-linked mannosylation. Catalyzes the formation of CDP-ribitol nucleotide sugar from D-ribitol 5-phosphate. CDP-ribitol is a substrate of FKTN during the biosynthesis of the phosphorylated O-mannosyl trisaccharide (N-acetylgalactosamine-beta-3-N-acetylglucosamine-beta-4-(phosphate-6-)mannose), a carbohydrate structure present in alpha-dystroglycan (DAG1), which is required for binding laminin G-like domain-containing extracellular proteins with high affinity. Shows activity toward other pentose phosphate sugars and mediates formation of CDP-ribulose or CDP-ribose using CTP and ribulose-5-phosphate or ribose-5-phosphate, respectively. Not involved in dolichol production. The protein is D-ribitol-5-phosphate cytidylyltransferase (Crppa) of Mus musculus (Mouse).